The sequence spans 749 residues: Protein phosphatase 1E (749 aa).

The disordered stretch occupies residues 21–128 (EFRGPCGGGE…PPLPPLPRPL (108 aa)). Repeat copies occupy residues 31-32 (PE), 33-34 (PE), and 35-36 (PE). Positions 31–44 (PEPEPESEPEPEPE) are 7 X 2 AA tandem repeats of P-E. The segment covering 31–45 (PEPEPESEPEPEPEA) has biased composition (acidic residues). The stretch at 37 to 38 (SE) is one 4; approximate repeat. 3 repeat units span residues 39 to 40 (PE), 41 to 42 (PE), and 43 to 44 (PE). The segment covering 46–55 (ELVAAEAAEA) has biased composition (low complexity). Acidic residues predominate over residues 69–102 (ATEEGEQDQDPEPEDEAVEEETATEGEEEEEEEA). The segment covering 110 to 126 (VPPPPQPQLPPLPPLPR) has biased composition (pro residues). The region spanning 224 to 485 (QIYYETSIHA…DNITVIVVFL (262 aa)) is the PPM-type phosphatase domain. 4 residues coordinate Mn(2+): Asp-270, Gly-271, Asp-432, and Asp-476. The disordered stretch occupies residues 495 to 537 (SEESEWTENSFQGGQEDGGDDKETHGECKRPWPQHQCSAPADL). Positions 515-524 (DKETHGECKR) are enriched in basic and acidic residues. 2 positions are modified to phosphoserine: Ser-532 and Ser-545. A disordered region spans residues 608–627 (VKSSLPERSGAGEPRVSFNL).

Belongs to the PP2C family. As to quaternary structure, heterotrimer. Interacts with PAX1 and ARHGEF6 (or ARHGEF7). It depends on Mg(2+) as a cofactor. Mn(2+) serves as cofactor.

The protein localises to the nucleus. Its subcellular location is the cytoplasm. It carries out the reaction O-phospho-L-seryl-[protein] + H2O = L-seryl-[protein] + phosphate. The catalysed reaction is O-phospho-L-threonyl-[protein] + H2O = L-threonyl-[protein] + phosphate. Its function is as follows. Protein phosphatase that inactivates multifunctional CaM kinases such as CAMK4 and CAMK2. Dephosphorylates and inactivates PAK. May play a role in the inhibition of actin fiber stress breakdown and in morphological changes driven by TNK2/CDC42. Dephosphorylates PRKAA2. This chain is Protein phosphatase 1E (Ppm1e), found in Mus musculus (Mouse).